We begin with the raw amino-acid sequence, 385 residues long: 8-amino-7-oxononanoate synthase (385 aa).

Position 21 (Arg-21) interacts with substrate. 108–109 (GF) is a binding site for pyridoxal 5'-phosphate. Position 133 (His-133) interacts with substrate. Positions 179, 207, and 233 each coordinate pyridoxal 5'-phosphate. N6-(pyridoxal phosphate)lysine is present on Lys-236. Residue Thr-352 coordinates substrate.

Belongs to the class-II pyridoxal-phosphate-dependent aminotransferase family. BioF subfamily. As to quaternary structure, homodimer. Pyridoxal 5'-phosphate is required as a cofactor.

It carries out the reaction 6-carboxyhexanoyl-[ACP] + L-alanine + H(+) = (8S)-8-amino-7-oxononanoate + holo-[ACP] + CO2. It functions in the pathway cofactor biosynthesis; biotin biosynthesis. In terms of biological role, catalyzes the decarboxylative condensation of pimeloyl-[acyl-carrier protein] and L-alanine to produce 8-amino-7-oxononanoate (AON), [acyl-carrier protein], and carbon dioxide. This is 8-amino-7-oxononanoate synthase from Salmonella typhimurium (strain LT2 / SGSC1412 / ATCC 700720).